Reading from the N-terminus, the 139-residue chain is Putative translationally-controlled tumor protein-like protein TPT1P8 (139 aa).

The 139-residue stretch at 1-139 (MIIFQDLISH…KTTSSLLVKT (139 aa)) folds into the TCTP domain. Polar residues predominate over residues 40–51 (TGNTDDSLIGRN). The segment at 40 to 60 (TGNTDDSLIGRNSSSESTEDE) is disordered.

The protein belongs to the TCTP family.

The chain is Putative translationally-controlled tumor protein-like protein TPT1P8 (TPT1P8) from Homo sapiens (Human).